A 447-amino-acid chain; its full sequence is Dirigent protein 10 (447 aa).

The N-terminal stretch at 1-21 (MAGQKILSLLVIALVVTFAAA) is a signal peptide. Gly residues predominate over residues 74–85 (SGSTGSGLGAGT). The interval 74 to 123 (SGSTGSGLGAGTGSIPSSGSGPGLLPTASSVPGSLAGGGSGSLPTTGSAT) is disordered. Positions 86–107 (GSIPSSGSGPGLLPTASSVPGS) are enriched in low complexity.

Belongs to the plant dirigent protein family. Homodimer. As to expression, in roots, mostly detected in root endodermis and quiescent center, and, to a lower extent, in root stele and cortex. Expressed in root vascular cylinder, flowers, siliques, cotyledon and leaf veins, and leaf margins. Present in the basal region of rosette leaf trichomes and in developing xylem.

It localises to the secreted. The protein resides in the extracellular space. Its subcellular location is the apoplast. In terms of biological role, dirigent proteins impart stereoselectivity on the phenoxy radical-coupling reaction, yielding optically active lignans from two molecules of coniferyl alcohol in the biosynthesis of lignans, flavonolignans, and alkaloids and thus plays a central role in plant secondary metabolism. Regulates suberin accumulation in roots. The polypeptide is Dirigent protein 10 (DIR10) (Arabidopsis thaliana (Mouse-ear cress)).